Here is a 309-residue protein sequence, read N- to C-terminus: Fructosamine-3-kinase (309 aa).

Position 1 is an N-acetylmethionine (Met-1). Residue 89–91 (EHL) coordinates ATP. The Proton acceptor role is filled by Asp-217.

It belongs to the fructosamine kinase family. In terms of assembly, monomer. As to expression, expressed in red blood cells, brain, heart, kidney and muscle. Lower expression is observed in liver. Not expressed in lung, spleen, testis and thymus.

The catalysed reaction is N(6)-(D-fructosyl)-L-lysyl-[protein] + ATP = N(6)-(3-O-phospho-D-fructosyl)-L-lysyl-[protein] + ADP + H(+). The enzyme catalyses N(6)-D-ribulosyl-L-lysyl-[protein] + ATP = N(6)-(3-O-phospho-D-ribulosyl)-L-lysyl-[protein] + ADP + H(+). It carries out the reaction N(6)-(D-psicosyl)-L-lysyl-[protein] + ATP = N(6)-(3-O-phospho-D-psicosyl)-L-lysyl-[protein] + ADP + H(+). Fructosamine-3-kinase involved in protein deglycation by mediating phosphorylation of fructoselysine residues on glycated proteins, to generate fructoselysine-3 phosphate. Fructoselysine-3 phosphate adducts are unstable and decompose under physiological conditions. Involved in intracellular deglycation in erythrocytes and pancreatic islets. Involved in the response to oxidative stress by mediating deglycation of NFE2L2/NRF2, glycation impairing NFE2L2/NRF2 function. Also able to phosphorylate psicosamines and ribulosamines. This chain is Fructosamine-3-kinase, found in Mus musculus (Mouse).